We begin with the raw amino-acid sequence, 285 residues long: Pantothenate synthetase (285 aa).

30-37 is a binding site for ATP; that stretch reads MGNLHRGH. Residue histidine 37 is the Proton donor of the active site. Residue glutamine 61 coordinates (R)-pantoate. Residue glutamine 61 participates in beta-alanine binding. 149–152 is an ATP binding site; it reads GRKD. Residue glutamine 155 participates in (R)-pantoate binding. ATP is bound by residues valine 178 and 186–189; that span reads LSSR.

This sequence belongs to the pantothenate synthetase family. Homodimer.

It is found in the cytoplasm. The catalysed reaction is (R)-pantoate + beta-alanine + ATP = (R)-pantothenate + AMP + diphosphate + H(+). The protein operates within cofactor biosynthesis; (R)-pantothenate biosynthesis; (R)-pantothenate from (R)-pantoate and beta-alanine: step 1/1. Functionally, catalyzes the condensation of pantoate with beta-alanine in an ATP-dependent reaction via a pantoyl-adenylate intermediate. The protein is Pantothenate synthetase of Halorhodospira halophila (strain DSM 244 / SL1) (Ectothiorhodospira halophila (strain DSM 244 / SL1)).